The chain runs to 308 residues: UDP-N-acetylenolpyruvoylglucosamine reductase (308 aa).

An FAD-binding PCMH-type domain is found at 22–185; that stretch reads RVGGPADWLF…VEAAFRADAG (164 aa). Residue R165 is part of the active site. The segment covering 197-211 has biased composition (basic and acidic residues); sequence QIARRDSSQPTRDRS. Residues 197 to 228 form a disordered region; the sequence is QIARRDSSQPTRDRSAGSTFRNPAGFSSTGRA. Polar residues predominate over residues 212–226; it reads AGSTFRNPAGFSSTG. The active-site Proton donor is S214. The active site involves E296.

The protein belongs to the MurB family. Requires FAD as cofactor.

It localises to the cytoplasm. It catalyses the reaction UDP-N-acetyl-alpha-D-muramate + NADP(+) = UDP-N-acetyl-3-O-(1-carboxyvinyl)-alpha-D-glucosamine + NADPH + H(+). The protein operates within cell wall biogenesis; peptidoglycan biosynthesis. Its function is as follows. Cell wall formation. This Cereibacter sphaeroides (strain ATCC 17025 / ATH 2.4.3) (Rhodobacter sphaeroides) protein is UDP-N-acetylenolpyruvoylglucosamine reductase.